We begin with the raw amino-acid sequence, 304 residues long: Protoheme IX farnesyltransferase 2 (304 aa).

Transmembrane regions (helical) follow at residues Val28 to Phe48, Trp50 to Phe70, Ile98 to Leu118, Leu122 to Leu142, Ile150 to Gly170, Ala176 to Ile196, Ile223 to Val243, Ser245 to Leu265, and Ile282 to Phe302.

This sequence belongs to the UbiA prenyltransferase family. Protoheme IX farnesyltransferase subfamily.

The protein localises to the cell inner membrane. The catalysed reaction is heme b + (2E,6E)-farnesyl diphosphate + H2O = Fe(II)-heme o + diphosphate. The protein operates within porphyrin-containing compound metabolism; heme O biosynthesis; heme O from protoheme: step 1/1. In terms of biological role, converts heme B (protoheme IX) to heme O by substitution of the vinyl group on carbon 2 of heme B porphyrin ring with a hydroxyethyl farnesyl side group. The polypeptide is Protoheme IX farnesyltransferase 2 (Vibrio campbellii (strain ATCC BAA-1116)).